The primary structure comprises 338 residues: UDP-3-O-acylglucosamine N-acyltransferase (338 aa).

The active-site Proton acceptor is the His-239.

It belongs to the transferase hexapeptide repeat family. LpxD subfamily. In terms of assembly, homotrimer.

The catalysed reaction is a UDP-3-O-[(3R)-3-hydroxyacyl]-alpha-D-glucosamine + a (3R)-hydroxyacyl-[ACP] = a UDP-2-N,3-O-bis[(3R)-3-hydroxyacyl]-alpha-D-glucosamine + holo-[ACP] + H(+). The protein operates within bacterial outer membrane biogenesis; LPS lipid A biosynthesis. Its function is as follows. Catalyzes the N-acylation of UDP-3-O-acylglucosamine using 3-hydroxyacyl-ACP as the acyl donor. Is involved in the biosynthesis of lipid A, a phosphorylated glycolipid that anchors the lipopolysaccharide to the outer membrane of the cell. This Thermosynechococcus vestitus (strain NIES-2133 / IAM M-273 / BP-1) protein is UDP-3-O-acylglucosamine N-acyltransferase.